Consider the following 562-residue polypeptide: Arginine--tRNA ligase (562 aa).

Positions 129–139 match the 'HIGH' region motif; that stretch reads ANPTGPLHVGH.

The protein belongs to the class-I aminoacyl-tRNA synthetase family. In terms of assembly, monomer.

It localises to the cytoplasm. It catalyses the reaction tRNA(Arg) + L-arginine + ATP = L-arginyl-tRNA(Arg) + AMP + diphosphate. The protein is Arginine--tRNA ligase of Xanthomonas campestris pv. campestris (strain B100).